Consider the following 492-residue polypeptide: Probable cytochrome P450 313a3 (492 aa).

A heme-binding site is contributed by Cys438.

The protein belongs to the cytochrome P450 family. Requires heme as cofactor.

The protein resides in the endoplasmic reticulum membrane. It localises to the microsome membrane. Functionally, may be involved in the metabolism of insect hormones and in the breakdown of synthetic insecticides. This Drosophila melanogaster (Fruit fly) protein is Probable cytochrome P450 313a3 (Cyp313a3).